The following is a 530-amino-acid chain: Autoinducer-2 kinase (530 aa).

This sequence belongs to the FGGY kinase family.

The protein resides in the cytoplasm. The catalysed reaction is (S)-4,5-dihydroxypentane-2,3-dione + ATP = (2S)-2-hydroxy-3,4-dioxopentyl phosphate + ADP + H(+). Catalyzes the phosphorylation of autoinducer-2 (AI-2) to phospho-AI-2, which subsequently inactivates the transcriptional regulator LsrR and leads to the transcription of the lsr operon. Phosphorylates the ring-open form of (S)-4,5-dihydroxypentane-2,3-dione (DPD), which is the precursor to all AI-2 signaling molecules, at the C5 position. This chain is Autoinducer-2 kinase, found in Escherichia coli O139:H28 (strain E24377A / ETEC).